The chain runs to 289 residues: 7-methylguanosine phosphate-specific 5'-nucleotidase (289 aa).

Asp38 serves as the catalytic Nucleophile. Residues Asp38 and Asp40 each contribute to the Mg(2+) site. Asp40 functions as the Proton donor in the catalytic mechanism. Glu85 serves as a coordination point for CMP. Residue Glu85 coordinates N(7)-methyl-GMP. Substrate is bound by residues Ser153–Ala154 and Lys202. Mg(2+) is bound at residue Asp227.

It belongs to the pyrimidine 5'-nucleotidase family. As to quaternary structure, monomer.

It is found in the cytoplasm. It carries out the reaction N(7)-methyl-GMP + H2O = N(7)-methylguanosine + phosphate. The enzyme catalyses CMP + H2O = cytidine + phosphate. The catalysed reaction is a ribonucleoside 5'-phosphate + H2O = a ribonucleoside + phosphate. Functionally, specifically hydrolyzes 7-methylguanosine monophosphate (m(7)GMP) to 7-methylguanosine and inorganic phosphate. The specific activity for m(7)GMP may protect cells against undesired salvage of m(7)GMP and its incorporation into nucleic acids. Also has weak activity for CMP. UMP and purine nucleotides are poor substrates. This chain is 7-methylguanosine phosphate-specific 5'-nucleotidase (NT5C3B), found in Gallus gallus (Chicken).